The chain runs to 308 residues: D-alanine--D-alanine ligase (308 aa).

The ATP-grasp domain occupies 102-302 (KKVAAAAGVA…FGELLSWMVE (201 aa)). 128–183 (PMEPPYVVKPVREGSSFGVVIVKEDQTHPPQIISSAEWNYGAEVLVEKYIPGRELT) contacts ATP. The Mg(2+) site is built by Asp252, Glu269, and Asn271.

Belongs to the D-alanine--D-alanine ligase family. It depends on Mg(2+) as a cofactor. Mn(2+) is required as a cofactor.

The protein resides in the cytoplasm. It catalyses the reaction 2 D-alanine + ATP = D-alanyl-D-alanine + ADP + phosphate + H(+). It participates in cell wall biogenesis; peptidoglycan biosynthesis. In terms of biological role, cell wall formation. In Brucella anthropi (strain ATCC 49188 / DSM 6882 / CCUG 24695 / JCM 21032 / LMG 3331 / NBRC 15819 / NCTC 12168 / Alc 37) (Ochrobactrum anthropi), this protein is D-alanine--D-alanine ligase.